We begin with the raw amino-acid sequence, 198 residues long: MEIITQDGWLEVITGCMFSGKTEELVRRLRRAVIAKKETIAIKPALDTRYDLVAVVSHSGFSFNAIPVEDPKSILGMAKDAEVVGIDEAQFFTGELVPVIRELLQNKKRVIVAGLDLDFRGEPFGIMPTLLALADEVTKLHAICSVCGNIATKTQRLINGRPARYDDPTILVGGLETYEARCNLHHEVPGKTLTLFKE.

ATP contacts are provided by residues glycine 15–threonine 22 and aspartate 87–glutamine 90. The active-site Proton acceptor is glutamate 88. Zn(2+) contacts are provided by cysteine 144, cysteine 147, cysteine 182, and histidine 185.

Belongs to the thymidine kinase family. In terms of assembly, homotetramer.

The protein localises to the cytoplasm. The catalysed reaction is thymidine + ATP = dTMP + ADP + H(+). This is Thymidine kinase from Coprothermobacter proteolyticus (strain ATCC 35245 / DSM 5265 / OCM 4 / BT).